A 186-amino-acid chain; its full sequence is GTP cyclohydrolase 1 (186 aa).

Residues C78, H81, and C150 each contribute to the Zn(2+) site.

This sequence belongs to the GTP cyclohydrolase I family. Toroid-shaped homodecamer, composed of two pentamers of five dimers.

It catalyses the reaction GTP + H2O = 7,8-dihydroneopterin 3'-triphosphate + formate + H(+). The protein operates within cofactor biosynthesis; 7,8-dihydroneopterin triphosphate biosynthesis; 7,8-dihydroneopterin triphosphate from GTP: step 1/1. This Enterococcus faecalis (strain ATCC 700802 / V583) protein is GTP cyclohydrolase 1.